A 337-amino-acid polypeptide reads, in one-letter code: D-alanine--D-alanine ligase (337 aa).

The ATP-grasp domain occupies 124 to 330; sequence KMWFSALGIP…FTEYLSLVIN (207 aa). 154 to 209 serves as a coordination point for ATP; it reads ALAQWGSIFVKAASQGSSVGCYKVDDSAKVAGVLKDAFGYAPYVIVEKTIKARELE. Asp284, Glu297, and Asn299 together coordinate Mg(2+).

The protein belongs to the D-alanine--D-alanine ligase family. It depends on Mg(2+) as a cofactor. The cofactor is Mn(2+).

The protein localises to the cytoplasm. The catalysed reaction is 2 D-alanine + ATP = D-alanyl-D-alanine + ADP + phosphate + H(+). Its pathway is cell wall biogenesis; peptidoglycan biosynthesis. In terms of biological role, cell wall formation. This is D-alanine--D-alanine ligase from Shewanella baltica (strain OS223).